We begin with the raw amino-acid sequence, 221 residues long: ATP phosphoribosyltransferase (221 aa).

Belongs to the ATP phosphoribosyltransferase family. Short subfamily. In terms of assembly, heteromultimer composed of HisG and HisZ subunits.

The protein localises to the cytoplasm. It catalyses the reaction 1-(5-phospho-beta-D-ribosyl)-ATP + diphosphate = 5-phospho-alpha-D-ribose 1-diphosphate + ATP. It participates in amino-acid biosynthesis; L-histidine biosynthesis; L-histidine from 5-phospho-alpha-D-ribose 1-diphosphate: step 1/9. Its function is as follows. Catalyzes the condensation of ATP and 5-phosphoribose 1-diphosphate to form N'-(5'-phosphoribosyl)-ATP (PR-ATP). Has a crucial role in the pathway because the rate of histidine biosynthesis seems to be controlled primarily by regulation of HisG enzymatic activity. The sequence is that of ATP phosphoribosyltransferase from Neisseria gonorrhoeae (strain ATCC 700825 / FA 1090).